A 254-amino-acid polypeptide reads, in one-letter code: 3-dehydroquinate dehydratase (254 aa).

3-dehydroquinate-binding positions include 47–49 (EFR) and R83. Catalysis depends on H144, which acts as the Proton donor/acceptor. Residue K171 is the Schiff-base intermediate with substrate of the active site. R213, S232, and Q236 together coordinate 3-dehydroquinate.

The protein belongs to the type-I 3-dehydroquinase family. In terms of assembly, homodimer.

The catalysed reaction is 3-dehydroquinate = 3-dehydroshikimate + H2O. The protein operates within metabolic intermediate biosynthesis; chorismate biosynthesis; chorismate from D-erythrose 4-phosphate and phosphoenolpyruvate: step 3/7. Functionally, involved in the third step of the chorismate pathway, which leads to the biosynthesis of aromatic amino acids. Catalyzes the cis-dehydration of 3-dehydroquinate (DHQ) and introduces the first double bond of the aromatic ring to yield 3-dehydroshikimate. This is 3-dehydroquinate dehydratase from Neisseria meningitidis serogroup A / serotype 4A (strain DSM 15465 / Z2491).